The sequence spans 175 residues: Apoptosis regulator Bcl-2 homolog (175 aa).

The helical transmembrane segment at 152 to 174 (YYVTRYFRVAAFIITSLAVINLF) threads the bilayer.

In terms of assembly, interacts with host BAK1 and BAX as well as other BH3-containing proteins including BIM, BID or PUMA.

It localises to the host membrane. Functionally, plays a role in the inhibition of host apoptosis. Interacts with host proapoptotic factors BAK1 and BAX to supposedly prevent their activation. The sequence is that of Apoptosis regulator Bcl-2 homolog (CNPV058) from Canarypox virus (CNPV).